The sequence spans 450 residues: Regulator of sigma-E protease RseP (450 aa).

The helical transmembrane segment at 1–21 (MLSFLWDLASFIVALGVLITV) threads the bilayer. H22 serves as a coordination point for Zn(2+). At 22-103 (HEFGHFWVAR…VGQRAAIIAA (82 aa)) the chain is on the periplasmic side. E23 is an active-site residue. H26 contributes to the Zn(2+) binding site. Residues 104-124 (GPVANFIFAIFAYWLVFIIGV) form a helical membrane-spanning segment. Residues 125 to 375 (PGVRPVVGEI…KGAGMTAELG (251 aa)) are Cytoplasmic-facing. PDZ domains follow at residues 127–220 (VRPV…PRGP) and 222–309 (IEPV…PKVI). A helical membrane pass occupies residues 376-396 (VVYYLPFLALISVNLGIINLF). Residues 397-429 (PLPVLDGGHLLFLAIEKIKGGPVSERVQDFCYR) lie on the Periplasmic side of the membrane. The helical transmembrane segment at 430–450 (IGSILLVLLMGLALFNDFSRL) threads the bilayer.

This sequence belongs to the peptidase M50B family. Interacts with RseA; the third transmembrane domain can be cross-linked to the transmembrane domain of RseA. Requires Zn(2+) as cofactor.

The protein localises to the cell inner membrane. Its activity is regulated as follows. Inhibited by Zn(2+) chelator 1,10-phenanthroline. Functionally, a site-2 regulated intramembrane protease (S2P) that cleaves the peptide bond between 'Ala-108' and 'Cys-109' in the transmembrane region of RseA. Part of a regulated intramembrane proteolysis (RIP) cascade. Acts on DegS-cleaved RseA to release the cytoplasmic domain of RseA, residue 'Val-148' of RseA may be required for this. This provides the cell with sigma-E (RpoE) activity through the proteolysis of RseA. Can also cleave sequences in transmembrane regions of other proteins (such as LacY) as well as liberated signal peptides of beta-lactamase, OmpF, LivK, SecM, PhoA, LivJ, OmpC, Lpp and TorA, probably within the membrane. Cleaves FecR within its transmembrane region to release an N-terminal cytoplasmic fragment which binds to sigma factor FecI, allowing it to activate transcription of the fecABCDE operon which mediates ferric citrate transport. This chain is Regulator of sigma-E protease RseP (rseP), found in Escherichia coli (strain K12).